A 467-amino-acid chain; its full sequence is UDP-N-acetylmuramate--L-alanine ligase (467 aa).

112–118 (GTHGKTT) lines the ATP pocket.

It belongs to the MurCDEF family.

Its subcellular location is the cytoplasm. The enzyme catalyses UDP-N-acetyl-alpha-D-muramate + L-alanine + ATP = UDP-N-acetyl-alpha-D-muramoyl-L-alanine + ADP + phosphate + H(+). It functions in the pathway cell wall biogenesis; peptidoglycan biosynthesis. Functionally, cell wall formation. The chain is UDP-N-acetylmuramate--L-alanine ligase from Polaromonas sp. (strain JS666 / ATCC BAA-500).